The primary structure comprises 461 residues: 3-oxoacyl-[acyl-carrier-protein] synthase, mitochondrial (461 aa).

Residues 1-28 (MATSNLRRHLSASRLRLNRFISTSSSYH) constitute a mitochondrion transit peptide. One can recognise a Ketosynthase family 3 (KS3) domain in the interval 30–460 (HRRVVVTGLG…GTNASLLFAS (431 aa)). Residues Cys209, His350, and His389 each act as for beta-ketoacyl synthase activity in the active site.

The protein belongs to the thiolase-like superfamily. Beta-ketoacyl-ACP synthases family. In terms of assembly, homodimer. As to expression, expressed at the same level in leaves, roots, siliques and flowers.

Its subcellular location is the mitochondrion. The enzyme catalyses a fatty acyl-[ACP] + malonyl-[ACP] + H(+) = a 3-oxoacyl-[ACP] + holo-[ACP] + CO2. The catalysed reaction is butanoyl-[ACP] + malonyl-[ACP] + H(+) = 3-oxohexanoyl-[ACP] + holo-[ACP] + CO2. It catalyses the reaction hexanoyl-[ACP] + malonyl-[ACP] + H(+) = 3-oxooctanoyl-[ACP] + holo-[ACP] + CO2. It carries out the reaction octanoyl-[ACP] + malonyl-[ACP] + H(+) = 3-oxodecanoyl-[ACP] + holo-[ACP] + CO2. The enzyme catalyses decanoyl-[ACP] + malonyl-[ACP] + H(+) = 3-oxododecanoyl-[ACP] + holo-[ACP] + CO2. The catalysed reaction is dodecanoyl-[ACP] + malonyl-[ACP] + H(+) = 3-oxotetradecanoyl-[ACP] + holo-[ACP] + CO2. It catalyses the reaction tetradecanoyl-[ACP] + malonyl-[ACP] + H(+) = 3-oxohexadecanoyl-[ACP] + holo-[ACP] + CO2. It carries out the reaction hexadecanoyl-[ACP] + malonyl-[ACP] + H(+) = 3-oxooctadecanoyl-[ACP] + holo-[ACP] + CO2. The protein operates within lipid metabolism; fatty acid biosynthesis. Its activity is regulated as follows. Inhibited by cerulenin. Its function is as follows. Catalyzes all the condensation reaction of fatty acid synthesis by the addition to an acyl acceptor of two carbons from malonyl-ACP. Able to elongate saturated acyl chains from 4 to at least 16 carbons. Uses malonyl-CoA but not acetyl-CoA as primer substrate. When expressed in a heterologous system, reveals a bimodal distribution of products, with peaks at C8 and C14-C16. The major product of the reaction (octanoyl-ACP) is required for the lipoylation of essential mitochondrial proteins. Required for mitochondrial fatty acid synthesis (mtFAS). MtFAS are essential for photorespiration and plant development, probably by influencing mitochondrial membrane lipid composition and other lipid metabolic pathways. The sequence is that of 3-oxoacyl-[acyl-carrier-protein] synthase, mitochondrial from Arabidopsis thaliana (Mouse-ear cress).